The chain runs to 643 residues: Translation factor GUF1, mitochondrial (643 aa).

Residues 1 to 18 (MLASQAIKRIFHRSWKPL) constitute a mitochondrion transit peptide. Positions 43–226 (ENYRNFSIVA…AIIDRIPPPT (184 aa)) constitute a tr-type G domain. GTP-binding positions include 52–59 (AHIDHGKS), 118–122 (DTPGH), and 172–175 (NKID).

This sequence belongs to the TRAFAC class translation factor GTPase superfamily. Classic translation factor GTPase family. LepA subfamily.

It localises to the mitochondrion inner membrane. The enzyme catalyses GTP + H2O = GDP + phosphate + H(+). Promotes mitochondrial protein synthesis. May act as a fidelity factor of the translation reaction, by catalyzing a one-codon backward translocation of tRNAs on improperly translocated ribosomes. Binds to mitochondrial ribosomes in a GTP-dependent manner. The sequence is that of Translation factor GUF1, mitochondrial from Zygosaccharomyces rouxii (strain ATCC 2623 / CBS 732 / NBRC 1130 / NCYC 568 / NRRL Y-229).